The primary structure comprises 446 residues: Tubulin alpha-2 chain (446 aa).

Positions 1 to 4 (MREC) match the MREC motif motif. 8 residues coordinate GTP: Q11, E68, S137, G141, T142, S176, N203, and N225. Mg(2+) is bound at residue E68. E251 is a catalytic residue.

The protein belongs to the tubulin family. In terms of assembly, dimer of alpha and beta chains. A typical microtubule is a hollow water-filled tube with an outer diameter of 25 nm and an inner diameter of 15 nM. Alpha-beta heterodimers associate head-to-tail to form protofilaments running lengthwise along the microtubule wall with the beta-tubulin subunit facing the microtubule plus end conferring a structural polarity. Microtubules usually have 13 protofilaments but different protofilament numbers can be found in some organisms and specialized cells. The cofactor is Mg(2+). Some glutamate residues at the C-terminus are polyglycylated, resulting in polyglycine chains on the gamma-carboxyl group. Glycylation is mainly limited to tubulin incorporated into axonemes (cilia and flagella) whereas glutamylation is prevalent in neuronal cells, centrioles, axonemes, and the mitotic spindle. Both modifications can coexist on the same protein on adjacent residues, and lowering polyglycylation levels increases polyglutamylation, and reciprocally. The precise function of polyglycylation is still unclear. Post-translationally, some glutamate residues at the C-terminus are polyglutamylated, resulting in polyglutamate chains on the gamma-carboxyl group. Polyglutamylation plays a key role in microtubule severing by spastin (SPAST). SPAST preferentially recognizes and acts on microtubules decorated with short polyglutamate tails: severing activity by SPAST increases as the number of glutamates per tubulin rises from one to eight, but decreases beyond this glutamylation threshold. Testis specific.

Its subcellular location is the cytoplasm. It localises to the cytoskeleton. It catalyses the reaction GTP + H2O = GDP + phosphate + H(+). Its function is as follows. Tubulin is the major constituent of microtubules, a cylinder consisting of laterally associated linear protofilaments composed of alpha- and beta-tubulin heterodimers. Microtubules grow by the addition of GTP-tubulin dimers to the microtubule end, where a stabilizing cap forms. Below the cap, tubulin dimers are in GDP-bound state, owing to GTPase activity of alpha-tubulin. The protein is Tubulin alpha-2 chain of Gallus gallus (Chicken).